A 243-amino-acid polypeptide reads, in one-letter code: 3-deoxy-manno-octulosonate cytidylyltransferase (243 aa).

This sequence belongs to the KdsB family.

The protein resides in the cytoplasm. The catalysed reaction is 3-deoxy-alpha-D-manno-oct-2-ulosonate + CTP = CMP-3-deoxy-beta-D-manno-octulosonate + diphosphate. It participates in nucleotide-sugar biosynthesis; CMP-3-deoxy-D-manno-octulosonate biosynthesis; CMP-3-deoxy-D-manno-octulosonate from 3-deoxy-D-manno-octulosonate and CTP: step 1/1. Activates KDO (a required 8-carbon sugar) for incorporation into bacterial lipopolysaccharide in Gram-negative bacteria. The sequence is that of 3-deoxy-manno-octulosonate cytidylyltransferase from Wigglesworthia glossinidia brevipalpis.